The chain runs to 469 residues: 3-isopropylmalate dehydratase large subunit (469 aa).

3 residues coordinate [4Fe-4S] cluster: Cys-347, Cys-410, and Cys-413.

The protein belongs to the aconitase/IPM isomerase family. LeuC type 1 subfamily. In terms of assembly, heterodimer of LeuC and LeuD. [4Fe-4S] cluster is required as a cofactor.

The catalysed reaction is (2R,3S)-3-isopropylmalate = (2S)-2-isopropylmalate. Its pathway is amino-acid biosynthesis; L-leucine biosynthesis; L-leucine from 3-methyl-2-oxobutanoate: step 2/4. Functionally, catalyzes the isomerization between 2-isopropylmalate and 3-isopropylmalate, via the formation of 2-isopropylmaleate. In Polynucleobacter necessarius subsp. necessarius (strain STIR1), this protein is 3-isopropylmalate dehydratase large subunit.